Consider the following 388-residue polypeptide: Pectin acetylesterase 1 (388 aa).

A signal peptide spans 1-24 (MKTLLYWGWSSLAGLILFSILAHG). 2 N-linked (GlcNAc...) asparagine glycosylation sites follow: Asn30 and Asn33. Residues Ser187 and Asp283 each act as charge relay system in the active site. The N-linked (GlcNAc...) asparagine glycan is linked to Asn304. His349 serves as the catalytic Charge relay system.

It belongs to the pectinacetylesterase family.

The protein localises to the secreted. It localises to the cell wall. Functionally, hydrolyzes acetyl esters in homogalacturonan regions of pectin. In type I primary cell wall, galacturonic acid residues of pectin can be acetylated at the O-2 and O-3 positions. Decreasing the degree of acetylation of pectin gels in vitro alters their physical properties. This chain is Pectin acetylesterase 1, found in Arabidopsis thaliana (Mouse-ear cress).